The following is a 274-amino-acid chain: Large ribosomal subunit protein uL2 (274 aa).

The disordered stretch occupies residues 224-256; it reads AMNPIDHPHGGGEGRTGEGRHAVDPWGNLTKGY. Basic and acidic residues predominate over residues 229–246; sequence DHPHGGGEGRTGEGRHAV.

It belongs to the universal ribosomal protein uL2 family. In terms of assembly, part of the 50S ribosomal subunit. Forms a bridge to the 30S subunit in the 70S ribosome.

In terms of biological role, one of the primary rRNA binding proteins. Required for association of the 30S and 50S subunits to form the 70S ribosome, for tRNA binding and peptide bond formation. It has been suggested to have peptidyltransferase activity; this is somewhat controversial. Makes several contacts with the 16S rRNA in the 70S ribosome. The sequence is that of Large ribosomal subunit protein uL2 from Acidovorax sp. (strain JS42).